We begin with the raw amino-acid sequence, 189 residues long: Isopentenyl-diphosphate Delta-isomerase (189 aa).

Residues His27 and His34 each coordinate Mn(2+). In terms of domain architecture, Nudix hydrolase spans 32–171 (PLHFAFSTYI…PFVFSPWLVD (140 aa)). Cys69 is a catalytic residue. Cys69 contributes to the Mg(2+) binding site. Residue His71 coordinates Mn(2+). Residue Glu89 participates in Mg(2+) binding. The Mn(2+) site is built by Glu119 and Glu121. Glu121 is an active-site residue.

This sequence belongs to the IPP isomerase type 1 family. It depends on Mg(2+) as a cofactor. Mn(2+) is required as a cofactor.

The protein resides in the cytoplasm. The enzyme catalyses isopentenyl diphosphate = dimethylallyl diphosphate. Its pathway is isoprenoid biosynthesis; dimethylallyl diphosphate biosynthesis; dimethylallyl diphosphate from isopentenyl diphosphate: step 1/1. Functionally, catalyzes the 1,3-allylic rearrangement of the homoallylic substrate isopentenyl (IPP) to its highly electrophilic allylic isomer, dimethylallyl diphosphate (DMAPP). This chain is Isopentenyl-diphosphate Delta-isomerase, found in Corynebacterium glutamicum (strain ATCC 13032 / DSM 20300 / JCM 1318 / BCRC 11384 / CCUG 27702 / LMG 3730 / NBRC 12168 / NCIMB 10025 / NRRL B-2784 / 534).